A 1024-amino-acid chain; its full sequence is MLKFFEKIFGSKHEKDVKKIQPVIDRINELHAALVPLSDDELRARCMELKARVRKTLEPIESKRSDLYLKLDDAAISLEDADRINEEIDELAKEYETATAAVLEEILPDTYAVVKDTCRRLKGHVYTVMGREATWDMVPYDVQLIGGIVLHSGKISEMATGEGKTLVSTLPTFLNALTGRGVHLVTVNDYLAQRDKEWMNPVFEFHGISVGVILNTMRPEERRRQYQCDVTYGTNNEFGFDYLRDNMAGTEDEMVQRDFYFAIVDEVDSVLIDEARTPLIISGPVPNADNSKFEEIRPWIEQLVRAQQHLTASFLSEAEKGLKNEKPDPEAGLALLRVKRGQPKNSRYTKLLAQQGVAKLIQTTENEYLRDKSSRMHEVDDELYFAVDEKASTIDLTDKGREFLSKLSHQDRDLFLLPDVGTEIAAIDADSSIAAPDKIMRKDEVYRLFAERSERLHNIAQLLKAYSLFTKDDEYVVQNGQVMIVDEFTGRILPGRRYSDGLHQAIEAKENVKIEGETQTMATVTIQNFFRLYKKLAGMTGTAETEASEFYEIYKLDVVAIPTNRPIVRRDMDDLVYKTRREKYNAIAAKVEELQKKGQPVLVGTTSVEVSETLSRMLRAKRITHNVLNAKQNEREAEIVAEAGRQGAVTIATNMAGRGTDIKLGEGVRDLGGLFILGSERHESRRIDRQLRGRAGRQGDPGESVFFVSLEDELMRLFGSDRVISVMDRLGHEEGDVIEHSMITKSIERAQKKVEEQNFAIRKRLLEYDDVLNQQREVIYTRRRDGLKKERLTSDILDLLRDYCDTTVEKHHKTHDVDALEEQVLRELSIEFKPDRETFEREGIAPMADSLYDLALAFYRRKEEAVPEEIMRQIEKYAVLSVIDKHWREHLREIDTLREGINLRAYGQKDPLLEYKQEAYNLFILLLHEIELETLSLAFKLFPVHPDEAGEIEERRRRAAIQQEKLMAQHEEAGSVYNAQPDGEPESQASKQQPVVADHSKPGRNDLCPCGSGKKYKNCHGREA.

ATP contacts are provided by residues Gln143, 161-165 (GEGKT), and Asp661. The interval 970–1024 (HEEAGSVYNAQPDGEPESQASKQQPVVADHSKPGRNDLCPCGSGKKYKNCHGREA) is disordered. Zn(2+)-binding residues include Cys1008, Cys1010, Cys1019, and His1020. Basic residues predominate over residues 1014-1024 (KKYKNCHGREA).

This sequence belongs to the SecA family. In terms of assembly, monomer and homodimer. Part of the essential Sec protein translocation apparatus which comprises SecA, SecYEG and auxiliary proteins SecDF. Other proteins may also be involved. Requires Zn(2+) as cofactor.

It localises to the cell inner membrane. The protein localises to the cytoplasm. The catalysed reaction is ATP + H2O + cellular proteinSide 1 = ADP + phosphate + cellular proteinSide 2.. Its function is as follows. Part of the Sec protein translocase complex. Interacts with the SecYEG preprotein conducting channel. Has a central role in coupling the hydrolysis of ATP to the transfer of proteins into and across the cell membrane, serving as an ATP-driven molecular motor driving the stepwise translocation of polypeptide chains across the membrane. The chain is Protein translocase subunit SecA from Chlorobium luteolum (strain DSM 273 / BCRC 81028 / 2530) (Pelodictyon luteolum).